Consider the following 132-residue polypeptide: MEVWGGKSYFKVEFVDNPKKIVKSWREKGGLVVHLTMYGKMIDDMIDEITKASKNFTLPLLVVIGSEKVEGWYYYNSDYNIGIGNQPHSEVSALAIFLDRIYKGEELYIHFSDAKFYIIPQLKGKRVVKTDK.

S-adenosyl-L-methionine-binding positions include Leu-35, 65–69 (GSEKV), and 83–90 (IGNQPHSE).

The protein belongs to the aTrm56 family. In terms of assembly, homodimer.

The protein localises to the cytoplasm. It carries out the reaction cytidine(56) in tRNA + S-adenosyl-L-methionine = 2'-O-methylcytidine(56) in tRNA + S-adenosyl-L-homocysteine + H(+). Its function is as follows. Specifically catalyzes the AdoMet-dependent 2'-O-ribose methylation of cytidine at position 56 in tRNAs. The protein is tRNA (cytidine(56)-2'-O)-methyltransferase of Sulfolobus acidocaldarius (strain ATCC 33909 / DSM 639 / JCM 8929 / NBRC 15157 / NCIMB 11770).